Here is a 201-residue protein sequence, read N- to C-terminus: Probable nicotinate-nucleotide adenylyltransferase (201 aa).

The protein belongs to the NadD family.

It catalyses the reaction nicotinate beta-D-ribonucleotide + ATP + H(+) = deamido-NAD(+) + diphosphate. It functions in the pathway cofactor biosynthesis; NAD(+) biosynthesis; deamido-NAD(+) from nicotinate D-ribonucleotide: step 1/1. Catalyzes the reversible adenylation of nicotinate mononucleotide (NaMN) to nicotinic acid adenine dinucleotide (NaAD). In Clostridium botulinum (strain Okra / Type B1), this protein is Probable nicotinate-nucleotide adenylyltransferase.